A 102-amino-acid polypeptide reads, in one-letter code: MLQLQFFLVVAAILFCIGIYGLIVSRNAIRVLMSIELMLNAVNLNFMAFSNFVDSGLIRGQVFSVFVITVAAAEAAVGLAIVLGIYRNRATIDMESFNLLRW.

Transmembrane regions (helical) follow at residues 4–24 (LQFF…GLIV), 33–53 (MSIE…SNFV), and 65–85 (VFVI…VLGI).

It belongs to the complex I subunit 4L family. NDH-1 can be composed of about 15 different subunits; different subcomplexes with different compositions have been identified which probably have different functions.

The protein localises to the cellular thylakoid membrane. It carries out the reaction a plastoquinone + NADH + (n+1) H(+)(in) = a plastoquinol + NAD(+) + n H(+)(out). The enzyme catalyses a plastoquinone + NADPH + (n+1) H(+)(in) = a plastoquinol + NADP(+) + n H(+)(out). Functionally, NDH-1 shuttles electrons from an unknown electron donor, via FMN and iron-sulfur (Fe-S) centers, to quinones in the respiratory and/or the photosynthetic chain. The immediate electron acceptor for the enzyme in this species is believed to be plastoquinone. Couples the redox reaction to proton translocation, and thus conserves the redox energy in a proton gradient. Cyanobacterial NDH-1 also plays a role in inorganic carbon-concentration. This is NAD(P)H-quinone oxidoreductase subunit 4L from Synechococcus sp. (strain JA-3-3Ab) (Cyanobacteria bacterium Yellowstone A-Prime).